A 460-amino-acid polypeptide reads, in one-letter code: DL-alanine permease SerP2 (460 aa).

12 consecutive transmembrane segments (helical) span residues 26–46 (LIAI…KSIH), 47–67 (LTGP…YILL), 98–118 (FIQW…LIAI), 124–144 (FWLP…LLTL), 160–180 (FGMI…ILIF), 209–229 (FFES…IGMT), 246–266 (QIPI…MSIY), 278–298 (FVTI…NFVV), 344–364 (ALLF…IPAI), 368–388 (FVFI…MTLI), 410–430 (HIFI…LFCF), and 433–453 (TIIP…FTFF).

This sequence belongs to the amino acid-polyamine-organocation (APC) superfamily. Amino acid transporter (AAT) (TC 2.A.3.1) family.

It localises to the cell membrane. Its function is as follows. Transports DL-alanine, DL-serine and glycine. The preferred substrate is DL-alanine. L-serine is a low-affinity substrate. The sequence is that of DL-alanine permease SerP2 from Lactococcus lactis subsp. cremoris (strain MG1363).